Here is a 65-residue protein sequence, read N- to C-terminus: Bacteriocin amylovorin-L (65 aa).

A propeptide spanning residues 1-15 (MKQLNSEQLQNIIGG) is cleaved from the precursor. A helical transmembrane segment spans residues 39-59 (LGGVWGAVIGGVGGAAVCGLA).

Active lactobin is composed of two different peptides, one which is lactobin A.

Its subcellular location is the secreted. The protein localises to the host cell membrane. This heat stable bacteriocin inhibits the growth of closely related Lactobacillus species. It may act as a pore-forming protein, creating a channel in the cell membrane. It kills Lactobacillus helveticus ATCC 15009, but displays no activity towards Listeria species. This chain is Bacteriocin amylovorin-L (amyL), found in Lactobacillus amylovorus.